The sequence spans 1360 residues: DNA-directed RNA polymerase subunit beta (1360 aa).

It belongs to the RNA polymerase beta chain family. As to quaternary structure, the RNAP catalytic core consists of 2 alpha, 1 beta, 1 beta' and 1 omega subunit. When a sigma factor is associated with the core the holoenzyme is formed, which can initiate transcription.

The enzyme catalyses RNA(n) + a ribonucleoside 5'-triphosphate = RNA(n+1) + diphosphate. Functionally, DNA-dependent RNA polymerase catalyzes the transcription of DNA into RNA using the four ribonucleoside triphosphates as substrates. This is DNA-directed RNA polymerase subunit beta from Teredinibacter turnerae (strain ATCC 39867 / T7901).